Consider the following 289-residue polypeptide: Thymidylate synthase (289 aa).

DUMP contacts are provided by residues Arg26 and 151-152 (RR). Catalysis depends on Cys171, which acts as the Nucleophile. DUMP-binding positions include 191–194 (RSGD), Asn202, and 232–234 (HVY). Asp194 is a binding site for (6R)-5,10-methylene-5,6,7,8-tetrahydrofolate. Ala288 contributes to the (6R)-5,10-methylene-5,6,7,8-tetrahydrofolate binding site.

This sequence belongs to the thymidylate synthase family. In terms of assembly, homodimer.

The catalysed reaction is dUMP + (6R)-5,10-methylene-5,6,7,8-tetrahydrofolate = 7,8-dihydrofolate + dTMP. Its pathway is pyrimidine metabolism; dTTP biosynthesis. This Equus caballus (Horse) protein is Thymidylate synthase.